The following is a 262-amino-acid chain: tRNA pseudouridine synthase A (262 aa).

Asp-54 serves as the catalytic Nucleophile. Tyr-113 contacts substrate.

The protein belongs to the tRNA pseudouridine synthase TruA family. Homodimer.

The enzyme catalyses uridine(38/39/40) in tRNA = pseudouridine(38/39/40) in tRNA. Formation of pseudouridine at positions 38, 39 and 40 in the anticodon stem and loop of transfer RNAs. The sequence is that of tRNA pseudouridine synthase A from Lactobacillus delbrueckii subsp. bulgaricus (strain ATCC BAA-365 / Lb-18).